The following is a 305-amino-acid chain: Methionyl-tRNA formyltransferase (305 aa).

108-111 (SLLP) lines the (6S)-5,6,7,8-tetrahydrofolate pocket.

It belongs to the Fmt family.

The catalysed reaction is L-methionyl-tRNA(fMet) + (6R)-10-formyltetrahydrofolate = N-formyl-L-methionyl-tRNA(fMet) + (6S)-5,6,7,8-tetrahydrofolate + H(+). In terms of biological role, attaches a formyl group to the free amino group of methionyl-tRNA(fMet). The formyl group appears to play a dual role in the initiator identity of N-formylmethionyl-tRNA by promoting its recognition by IF2 and preventing the misappropriation of this tRNA by the elongation apparatus. The protein is Methionyl-tRNA formyltransferase of Thermus thermophilus (strain ATCC BAA-163 / DSM 7039 / HB27).